A 136-amino-acid chain; its full sequence is Large ribosomal subunit protein uL16 (136 aa).

This sequence belongs to the universal ribosomal protein uL16 family. Part of the 50S ribosomal subunit.

Binds 23S rRNA and is also seen to make contacts with the A and possibly P site tRNAs. In Actinobacillus succinogenes (strain ATCC 55618 / DSM 22257 / CCUG 43843 / 130Z), this protein is Large ribosomal subunit protein uL16.